Consider the following 2225-residue polypeptide: Nonribisomal peptide synthetase notE' (2225 aa).

The interval 24–59 (TVRESLSSSPSPLPSLASPVSSGSEPPAFGETQPQS) is disordered. The span at 28–49 (SLSSSPSPLPSLASPVSSGSEP) shows a compositional bias: low complexity. Residues 83–482 (QERCKEAPQS…GRRDGQLKIR (400 aa)) form an adenylation 1 region. Residues 614–690 (SPTTATELML…EQAQRATPMT (77 aa)) enclose the Carrier 1 domain. O-(pantetheine 4'-phosphoryl)serine is present on S651. Residues 730–1142 (EDIYPCTPLQ…DLASPLDQDL (413 aa)) are condensation 1. The interval 1164 to 1563 (AQAMQQPSRQ…GRRDTQVKVR (400 aa)) is adenylation 2. Positions 1699–1775 (PVSHGAELRL…DLARCTGEEQ (77 aa)) constitute a Carrier 2 domain. At S1736 the chain carries O-(pantetheine 4'-phosphoryl)serine. The interval 1827–2138 (FAFHGEVSID…FILQHQNIDM (312 aa)) is condensation 2.

It belongs to the NRP synthetase family.

It catalyses the reaction L-proline + L-tryptophan + 2 ATP = brevianamide F + 2 AMP + 2 diphosphate + 2 H(+). Its pathway is alkaloid biosynthesis. In terms of biological role, nonribisomal peptide synthetase; part of the gene cluster that mediates the biosynthesis of notoamide, a fungal indole alkaloid that belongs to a family of natural products containing a characteristic bicyclo[2.2.2]diazaoctane core. The first step of notoamide biosynthesis involves coupling of L-proline and L-tryptophan by the bimodular NRPS notE', to produce cyclo-L-tryptophan-L-proline called brevianamide F. The reverse prenyltransferase notF' then acts as a deoxybrevianamide E synthase and converts brevianamide F to deoxybrevianamide E via reverse prenylation at C-2 of the indole ring leading to the bicyclo[2.2.2]diazaoctane core. Deoxybrevianamide E is further hydroxylated at C-6 of the indole ring, likely catalyzed by the cytochrome P450 monooxygenase notG', to yield 6-hydroxy-deoxybrevianamide E. 6-hydroxy-deoxybrevianamide E is a specific substrate of the prenyltransferase notC' for normal prenylation at C-7 to produce 6-hydroxy-7-prenyl-deoxybrevianamide, also called notoamide S. As the proposed pivotal branching point in notoamide biosynthesis, notoamide S can be diverted to notoamide E through an oxidative pyran ring closure putatively catalyzed by either notH' cytochrome P450 monooxygenase or the notD' FAD-linked oxidoreductase. This step would be followed by an indole 2,3-epoxidation-initiated pinacol-like rearrangement catalyzed by the notB' FAD-dependent monooxygenase leading to the formation of notoamide C and notoamide D. On the other hand notoamide S is converted to notoamide T by notH' (or notD'), a bifunctional oxidase that also functions as the intramolecular Diels-Alderase responsible for generation of (-)-notoamide T. To generate antipodal (+)-notoaminide T, notH (or notD) in Aspergillus strain MF297-2 is expected to catalyze a Diels-Alder reaction leading to the opposite stereochemistry. The remaining oxidoreductase notD' (or notH') likely catalyzes the oxidative pyran ring formation to yield (-)-stephacidin A. The FAD-dependent monooxygenase notI' is highly similar to notB' and is predicted to catalyze a similar conversion from (-)-stephacidin A to (+)-notoamide B via the 2,3-epoxidation of (-)-stephacidin A followed by a pinacol-type rearrangement. Finally, it remains unclear which enzyme could be responsible for the final hydroxylation steps leading to notoamide A and sclerotiamide. This chain is Nonribisomal peptide synthetase notE', found in Aspergillus versicolor.